The chain runs to 149 residues: Small ribosomal subunit protein uS19w (149 aa).

It belongs to the universal ribosomal protein uS19 family.

The protein resides in the cytoplasm. The polypeptide is Small ribosomal subunit protein uS19w (RPS15E) (Arabidopsis thaliana (Mouse-ear cress)).